The primary structure comprises 911 residues: Protein translocase subunit SecA (911 aa).

Residues Gln86, 104–108 (GEGKT), and Asp512 each bind ATP. Residues Cys895, Cys897, Cys906, and His907 each coordinate Zn(2+).

This sequence belongs to the SecA family. As to quaternary structure, monomer and homodimer. Part of the essential Sec protein translocation apparatus which comprises SecA, SecYEG and auxiliary proteins SecDF-YajC and YidC. It depends on Zn(2+) as a cofactor.

Its subcellular location is the cell inner membrane. The protein resides in the cytoplasm. It carries out the reaction ATP + H2O + cellular proteinSide 1 = ADP + phosphate + cellular proteinSide 2.. Part of the Sec protein translocase complex. Interacts with the SecYEG preprotein conducting channel. Has a central role in coupling the hydrolysis of ATP to the transfer of proteins into and across the cell membrane, serving both as a receptor for the preprotein-SecB complex and as an ATP-driven molecular motor driving the stepwise translocation of polypeptide chains across the membrane. The polypeptide is Protein translocase subunit SecA (Bordetella bronchiseptica (strain ATCC BAA-588 / NCTC 13252 / RB50) (Alcaligenes bronchisepticus)).